A 65-amino-acid chain; its full sequence is Large ribosomal subunit protein bL35 (65 aa).

The tract at residues Met1–Arg40 is disordered. The segment covering Lys21 to Arg40 has biased composition (basic residues).

The protein belongs to the bacterial ribosomal protein bL35 family.

The polypeptide is Large ribosomal subunit protein bL35 (Bacteroides fragilis (strain ATCC 25285 / DSM 2151 / CCUG 4856 / JCM 11019 / LMG 10263 / NCTC 9343 / Onslow / VPI 2553 / EN-2)).